The following is a 146-amino-acid chain: Hemoglobin subunit beta (146 aa).

Val1 bears the N-acetylvaline mark. Positions His2–His146 constitute a Globin domain. Thr12 is subject to Phosphothreonine. Ser44 is subject to Phosphoserine. Position 59 is an N6-acetyllysine (Lys59). His63 is a binding site for heme b. N6-acetyllysine is present on Lys82. His92 contacts heme b. Cys93 is subject to S-nitrosocysteine. N6-acetyllysine is present on Lys144.

The protein belongs to the globin family. In terms of assembly, heterotetramer of two alpha chains and two beta chains. As to expression, red blood cells.

Functionally, involved in oxygen transport from the lung to the various peripheral tissues. This chain is Hemoglobin subunit beta (HBB), found in Leontocebus fuscicollis (Brown-mantled tamarin).